We begin with the raw amino-acid sequence, 527 residues long: D-3-phosphoglycerate dehydrogenase (527 aa).

Residues Arg149–Val150, Asp169, Ala228–Arg230, and Asp254 each bind NAD(+). Arg230 is an active-site residue. Glu259 is a catalytic residue. His278 functions as the Proton donor in the catalytic mechanism. His278–Ala281 provides a ligand contact to NAD(+). One can recognise an ACT domain in the interval Tyr453–Leu527.

This sequence belongs to the D-isomer specific 2-hydroxyacid dehydrogenase family.

The catalysed reaction is (2R)-3-phosphoglycerate + NAD(+) = 3-phosphooxypyruvate + NADH + H(+). Its pathway is amino-acid biosynthesis; L-serine biosynthesis; L-serine from 3-phospho-D-glycerate: step 1/3. The protein is D-3-phosphoglycerate dehydrogenase (serA) of Archaeoglobus fulgidus (strain ATCC 49558 / DSM 4304 / JCM 9628 / NBRC 100126 / VC-16).